A 254-amino-acid chain; its full sequence is NADPH-dependent ferric-chelate reductase (254 aa).

In terms of domain architecture, FAD-binding FR-type spans 15-136 (LRFRELTVLR…AGPRGSLVVP (122 aa)).

The protein belongs to the SIP oxidoreductase family.

The protein localises to the cytoplasm. It catalyses the reaction 2 a Fe(II)-siderophore + NADP(+) + H(+) = 2 a Fe(III)-siderophore + NADPH. In terms of biological role, plays a role in iron homeostasis under excess nickel conditions. The protein is NADPH-dependent ferric-chelate reductase (yqjH) of Escherichia coli (strain K12).